Consider the following 79-residue polypeptide: Acyl carrier protein (79 aa).

The 76-residue stretch at 2-77 (SDIAERVKKI…DAVKFLEKNS (76 aa)) folds into the Carrier domain. At Ser-37 the chain carries O-(pantetheine 4'-phosphoryl)serine.

This sequence belongs to the acyl carrier protein (ACP) family. In terms of processing, 4'-phosphopantetheine is transferred from CoA to a specific serine of apo-ACP by AcpS. This modification is essential for activity because fatty acids are bound in thioester linkage to the sulfhydryl of the prosthetic group.

The protein localises to the cytoplasm. Its pathway is lipid metabolism; fatty acid biosynthesis. In terms of biological role, carrier of the growing fatty acid chain in fatty acid biosynthesis. This is Acyl carrier protein from Methylobacterium radiotolerans (strain ATCC 27329 / DSM 1819 / JCM 2831 / NBRC 15690 / NCIMB 10815 / 0-1).